A 425-amino-acid chain; its full sequence is Putative nucleoside transporter YegT (425 aa).

The Periplasmic segment spans residues 1-8; it reads MKTTAKLS. A helical transmembrane segment spans residues 9–29; the sequence is FMMFVEWFIWGAWFVPLWLWL. Over 30–38 the chain is Cytoplasmic; sequence SKSGFSAGE. A helical transmembrane segment spans residues 39 to 59; that stretch reads IGWSYACTAIAAILSPILVGS. At 60-63 the chain is on the periplasmic side; the sequence is ITDR. A helical transmembrane segment spans residues 64 to 84; the sequence is FFSAQKVLAVLMFAGALLMYF. Over 85 to 90 the chain is Cytoplasmic; sequence AAQQTT. A helical membrane pass occupies residues 91–111; sequence FAGFFPLLLAYSLTYMPTIAL. At 112–131 the chain is on the periplasmic side; it reads TNSIAFANVPDVERDFPRIR. The chain crosses the membrane as a helical span at residues 132 to 152; the sequence is VMGTIGWIASGLACGFLPQIL. The Cytoplasmic portion of the chain corresponds to 153–161; the sequence is GYADISPTN. Residues 162 to 182 form a helical membrane-spanning segment; it reads IPLLITAGSSALLGVFAFFLP. The Periplasmic portion of the chain corresponds to 183–210; sequence DTPPKSTGKMDIKVMLGLDALILLRDKN. The helical transmembrane segment at 211 to 231 threads the bilayer; the sequence is FLVFFFCSFLFAMPLAFYYIF. At 232-244 the chain is on the cytoplasmic side; sequence ANGYLTEVGMKNA. Residues 245-265 traverse the membrane as a helical segment; that stretch reads TGWMTLGQFSEIFFMLALPFF. At 266 to 287 the chain is on the periplasmic side; it reads TKRFGIKKVLLLGLVTAAIRYG. A helical transmembrane segment spans residues 288–308; it reads FFIYGSADEYFTYALLFLGIL. Over 309-339 the chain is Cytoplasmic; that stretch reads LHGVSYDFYYVTAYIYVDKKAPVHMRTAAQG. The chain crosses the membrane as a helical span at residues 340–360; sequence LITLCCQGFGSLLGYRLGGVM. The Periplasmic segment spans residues 361-379; the sequence is MEKMFAYQEPVNGLTFNWS. Residues 380–400 traverse the membrane as a helical segment; the sequence is GMWTFGAVMIAIIAVLFMIFF. Residues 401-425 are Cytoplasmic-facing; sequence RESDNEITAIKVDDRDIALTQGEVK.

This sequence belongs to the major facilitator superfamily. Nucleoside:H(+) symporter (NHS) (TC 2.A.1.10) family.

The protein resides in the cell inner membrane. Could be involved in nucleoside transport. The sequence is that of Putative nucleoside transporter YegT (yegT) from Escherichia coli (strain K12).